A 122-amino-acid polypeptide reads, in one-letter code: Large ribosomal subunit protein uL14c (122 aa).

Belongs to the universal ribosomal protein uL14 family. As to quaternary structure, part of the 50S ribosomal subunit.

It is found in the plastid. The protein localises to the chloroplast. Its function is as follows. Binds to 23S rRNA. The polypeptide is Large ribosomal subunit protein uL14c (Psilotum nudum (Whisk fern)).